Here is a 128-residue protein sequence, read N- to C-terminus: Nascent polypeptide-associated complex protein (128 aa).

One can recognise an NAC-A/B domain in the interval 8–75 (PRMLKKMQKM…PKKIKKEKVE (68 aa)).

The protein belongs to the NAC-alpha family. Homodimer. Interacts with the ribosome. Binds ribosomal RNA.

In terms of biological role, contacts the emerging nascent chain on the ribosome. In Methanocaldococcus jannaschii (strain ATCC 43067 / DSM 2661 / JAL-1 / JCM 10045 / NBRC 100440) (Methanococcus jannaschii), this protein is Nascent polypeptide-associated complex protein.